The sequence spans 36 residues: Potassium channel toxin alpha-KTx 2.7 (36 aa).

3 cysteine pairs are disulfide-bonded: Cys7–Cys29, Cys13–Cys34, and Cys17–Cys36.

It belongs to the short scorpion toxin superfamily. Potassium channel inhibitor family. Alpha-KTx 02 subfamily. As to expression, expressed by the venom gland.

It is found in the secreted. Functionally, inhibitor of voltage-gated potassium channels (Kv). This protein is capable of displacing the binding of radio-labeled noxiustoxin (AC P08815) to rat brain synaptosomes with high affinity (about 100 pM). It is also capable of inhibiting transient potassium-currents (resembling I(A)-type currents), in cultured rat cerebellar granule cells. About 50% of the peak currents are reduced by application of a 1.5 uM solution of this toxin. Is lethal to mice (when less than 100 ug are injected). The protein is Potassium channel toxin alpha-KTx 2.7 of Centruroides limpidus (Mexican scorpion).